Here is a 194-residue protein sequence, read N- to C-terminus: UPF0301 protein BPEN_258 (194 aa).

This sequence belongs to the UPF0301 (AlgH) family.

This Blochmanniella pennsylvanica (strain BPEN) protein is UPF0301 protein BPEN_258.